A 240-amino-acid chain; its full sequence is Dihydromonapterin reductase (240 aa).

Y152 functions as the Proton acceptor in the catalytic mechanism.

The protein belongs to the short-chain dehydrogenases/reductases (SDR) family. FolM subfamily.

The catalysed reaction is (6S)-5,6,7,8-tetrahydrofolate + NADP(+) = 7,8-dihydrofolate + NADPH + H(+). It carries out the reaction 7,8-dihydromonapterin + NADPH + H(+) = 5,6,7,8-tetrahydromonapterin + NADP(+). In terms of biological role, catalyzes the reduction of dihydromonapterin to tetrahydromonapterin. Also has lower activity with dihydrofolate. This chain is Dihydromonapterin reductase (folM), found in Shigella sonnei (strain Ss046).